Consider the following 129-residue polypeptide: Small ribosomal subunit protein uS9 (129 aa).

The disordered stretch occupies residues 110 to 129; the sequence is VERKKYGKKKARKSFQFSKR. Residues 114-129 show a composition bias toward basic residues; the sequence is KYGKKKARKSFQFSKR.

The protein belongs to the universal ribosomal protein uS9 family.

The sequence is that of Small ribosomal subunit protein uS9 from Chlorobaculum parvum (strain DSM 263 / NCIMB 8327) (Chlorobium vibrioforme subsp. thiosulfatophilum).